The primary structure comprises 447 residues: 26S proteasome non-ATPase regulatory subunit 12 (447 aa).

A disordered region spans residues 1–23 (MTIGLEPAVSSKTKDKMEQDLSP). The region spanning 240-411 (NYIEIARCYL…GIATFTTTND (172 aa)) is the PCI domain.

Belongs to the proteasome subunit p55 family.

In terms of biological role, acts as a regulatory subunit of the 26S proteasome which is involved in the ATP-dependent degradation of ubiquitinated proteins. This Dictyostelium discoideum (Social amoeba) protein is 26S proteasome non-ATPase regulatory subunit 12 (psmD12).